We begin with the raw amino-acid sequence, 133 residues long: uncharacterized protein (133 aa).

This is an uncharacterized protein from Enterobacteria phage T4 (Bacteriophage T4).